We begin with the raw amino-acid sequence, 337 residues long: Ketol-acid reductoisomerase (NADP(+)) (337 aa).

Positions V3 to T183 constitute a KARI N-terminal Rossmann domain. Residues Y26–Q29, K49, S52, S54, and D84–Q87 each bind NADP(+). H109 is a catalytic residue. G135 provides a ligand contact to NADP(+). The region spanning T184–V329 is the KARI C-terminal knotted domain. D192, E196, E228, and E232 together coordinate Mg(2+). S253 provides a ligand contact to substrate.

It belongs to the ketol-acid reductoisomerase family. Requires Mg(2+) as cofactor.

The catalysed reaction is (2R)-2,3-dihydroxy-3-methylbutanoate + NADP(+) = (2S)-2-acetolactate + NADPH + H(+). It carries out the reaction (2R,3R)-2,3-dihydroxy-3-methylpentanoate + NADP(+) = (S)-2-ethyl-2-hydroxy-3-oxobutanoate + NADPH + H(+). The protein operates within amino-acid biosynthesis; L-isoleucine biosynthesis; L-isoleucine from 2-oxobutanoate: step 2/4. It participates in amino-acid biosynthesis; L-valine biosynthesis; L-valine from pyruvate: step 2/4. In terms of biological role, involved in the biosynthesis of branched-chain amino acids (BCAA). Catalyzes an alkyl-migration followed by a ketol-acid reduction of (S)-2-acetolactate (S2AL) to yield (R)-2,3-dihydroxy-isovalerate. In the isomerase reaction, S2AL is rearranged via a Mg-dependent methyl migration to produce 3-hydroxy-3-methyl-2-ketobutyrate (HMKB). In the reductase reaction, this 2-ketoacid undergoes a metal-dependent reduction by NADPH to yield (R)-2,3-dihydroxy-isovalerate. This Mycobacterium sp. (strain JLS) protein is Ketol-acid reductoisomerase (NADP(+)).